A 292-amino-acid chain; its full sequence is Glutamyl-Q tRNA(Asp) synthetase (292 aa).

L-glutamate-binding positions include 9-13 (RFAPS) and Glu45. The 'HIGH' region motif lies at 12 to 22 (PSPSGPLHAGS). Zn(2+) is bound by residues Cys99, Cys101, Tyr121, and Cys125. Tyr184 and Arg202 together coordinate L-glutamate. The 'KMSKS' region signature appears at 240–244 (KLSKQ). Lys243 is an ATP binding site.

Belongs to the class-I aminoacyl-tRNA synthetase family. GluQ subfamily. It depends on Zn(2+) as a cofactor.

In terms of biological role, catalyzes the tRNA-independent activation of glutamate in presence of ATP and the subsequent transfer of glutamate onto a tRNA(Asp). Glutamate is transferred on the 2-amino-5-(4,5-dihydroxy-2-cyclopenten-1-yl) moiety of the queuosine in the wobble position of the QUC anticodon. This chain is Glutamyl-Q tRNA(Asp) synthetase, found in Verminephrobacter eiseniae (strain EF01-2).